Consider the following 293-residue polypeptide: Fructose-bisphosphate aldolase (293 aa).

S50 provides a ligand contact to D-glyceraldehyde 3-phosphate. D85 functions as the Proton donor in the catalytic mechanism. Zn(2+) contacts are provided by H86, D106, E136, and H178. A dihydroxyacetone phosphate-binding site is contributed by G179. H208 is a Zn(2+) binding site. Residues 209 to 211 and 230 to 233 each bind dihydroxyacetone phosphate; these read GGS and NVNT.

Belongs to the class II fructose-bisphosphate aldolase family. Requires Zn(2+) as cofactor.

The catalysed reaction is beta-D-fructose 1,6-bisphosphate = D-glyceraldehyde 3-phosphate + dihydroxyacetone phosphate. It participates in carbohydrate degradation; glycolysis; D-glyceraldehyde 3-phosphate and glycerone phosphate from D-glucose: step 4/4. In terms of biological role, catalyzes the aldol condensation of dihydroxyacetone phosphate (DHAP or glycerone-phosphate) with glyceraldehyde 3-phosphate (G3P) to form fructose 1,6-bisphosphate (FBP) in gluconeogenesis and the reverse reaction in glycolysis. The polypeptide is Fructose-bisphosphate aldolase (fba) (Streptococcus pyogenes serotype M6 (strain ATCC BAA-946 / MGAS10394)).